The primary structure comprises 304 residues: Acetylglutamate kinase (304 aa).

Residues 72-73 (GG), Arg94, and Asn199 each bind substrate.

This sequence belongs to the acetylglutamate kinase family. ArgB subfamily.

The protein localises to the cytoplasm. It carries out the reaction N-acetyl-L-glutamate + ATP = N-acetyl-L-glutamyl 5-phosphate + ADP. The protein operates within amino-acid biosynthesis; L-arginine biosynthesis; N(2)-acetyl-L-ornithine from L-glutamate: step 2/4. Functionally, catalyzes the ATP-dependent phosphorylation of N-acetyl-L-glutamate. The polypeptide is Acetylglutamate kinase (Methylobacterium nodulans (strain LMG 21967 / CNCM I-2342 / ORS 2060)).